Consider the following 431-residue polypeptide: Helix-loop-helix protein 11 (431 aa).

Positions 88-109 are disordered; the sequence is LANRSLSQPAPLSPTSLDPDRR. The segment covering 91-103 has biased composition (polar residues); that stretch reads RSLSQPAPLSPTS. The bHLH domain maps to 112–163; that stretch reads MRRQIANCNERRRMQSINAGFLALRALLPRKEGEKLSKAAILQQTADMVHQL. Composition is skewed to polar residues over residues 226-241 and 248-257; these read TTTS…PRSN and LPSSYASSAL. The interval 226 to 311 is disordered; that stretch reads TTTSSQASSP…PPPTLPSLET (86 aa). A compositionally biased stretch (low complexity) spans 274-291; that stretch reads TTSTPLSLLTLNGSPTSS.

As to expression, expressed in the pharynx, nerve cords, the H-shaped excretory cell, vulva muscles, and the anal depressor (at protein level). Expressed in the intestine (at protein level). In males, it is also expressed in the spicules and hyp7 cells of the hypodermis (at protein level).

It is found in the nucleus. Its function is as follows. Transcriptional regulator. Component of a feedback loop involving atfs-1, atgl-1 and hlh-11. Binds to the promoter of the atgl-1 lipase to negatively regulate the expression of atgl-1, and thereby promoting fat oxidation in response to mitochondrial stress and mitochondrial respiration in the intestine. In addition, functions with atfs-1 to maintain lifespan. May have a role in fertility and in positively regulating body size. The protein is Helix-loop-helix protein 11 of Caenorhabditis elegans.